A 255-amino-acid polypeptide reads, in one-letter code: MMRVKHIAVGSRLLPLSFECKDGEVVHVVGPNGSGKSTLLAAISGTLTGRDGASGEVHVDDKNLLTLSLSEQAHVRGYLCQQSRPAFNVDVFQYLALSLPSGTAITDGKVRDAVNMVVELVQLQDKLHRSIQTLSGGEWQRVRLAGVCLQVWRTINPYSQLLILDEPAAPLDIAQEGLLYQLINAIAAQGIGVLVANHDLNRTLKHADKVLLLSNGVLHSSGRADDVLSEAGLAEVFKTQARKVMIDERPYLIFD.

Residues 2 to 240 (MRVKHIAVGS…AGLAEVFKTQ (239 aa)) enclose the ABC transporter domain. 30–37 (GPNGSGKS) is an ATP binding site.

This sequence belongs to the ABC transporter superfamily. Vitamin B12 importer (TC 3.A.1.13.1) family. In terms of assembly, the complex is composed of two ATP-binding proteins (BtuD), two transmembrane proteins (BtuC) and a solute-binding protein (BtuF).

It is found in the cell inner membrane. The catalysed reaction is an R-cob(III)alamin(out) + ATP + H2O = an R-cob(III)alamin(in) + ADP + phosphate + H(+). In terms of biological role, part of the ABC transporter complex BtuCDF involved in vitamin B12 import. Responsible for energy coupling to the transport system. This chain is Vitamin B12 import ATP-binding protein BtuD, found in Vibrio parahaemolyticus serotype O3:K6 (strain RIMD 2210633).